The following is a 202-amino-acid chain: Holliday junction resolvase RecU (202 aa).

Mg(2+)-binding residues include threonine 85, aspartate 87, glutamate 100, and glutamine 119.

Belongs to the RecU family. Mg(2+) is required as a cofactor.

The protein resides in the cytoplasm. It carries out the reaction Endonucleolytic cleavage at a junction such as a reciprocal single-stranded crossover between two homologous DNA duplexes (Holliday junction).. Endonuclease that resolves Holliday junction intermediates in genetic recombination. Cleaves mobile four-strand junctions by introducing symmetrical nicks in paired strands. Promotes annealing of linear ssDNA with homologous dsDNA. Required for DNA repair, homologous recombination and chromosome segregation. In Streptococcus equi subsp. zooepidemicus (strain H70), this protein is Holliday junction resolvase RecU.